Reading from the N-terminus, the 83-residue chain is MKASMFLALAGLVLLFVVGYASESEEKEFPRELLSKIFAVDDFTGEERGCKGFGDSCTPGKNECCPNYACSSKHKWCKVYLGK.

The N-terminal stretch at 1–21 (MKASMFLALAGLVLLFVVGYA) is a signal peptide. Positions 22–48 (SESEEKEFPRELLSKIFAVDDFTGEER) are excised as a propeptide. 3 disulfides stabilise this stretch: C50-C65, C57-C70, and C64-C77. A Leucine amide modification is found at L81.

The protein belongs to the neurotoxin 10 (Hwtx-1) family. 15 (Hntx-3) subfamily. In terms of assembly, monomer. As to expression, expressed by the venom gland.

It is found in the secreted. Functionally, selective antagonist of neuronal tetrodotoxin (TTX)-sensitive voltage-gated sodium channels (IC(50)=1270 nM on Nav1.1/SCN1A, 270 nM on Nav1.2/SCN2A, 491 nM on Nav1.3/SCN3A and 232 nM on Nav1.7/SCN9A). This toxin suppress Nav1.7 current amplitude without significantly altering the activation, inactivation, and repriming kinetics. Short extreme depolarizations partially activate the toxin-bound channel, indicating voltage-dependent inhibition of this toxin. This toxin increases the deactivation of the Nav1.7 current after extreme depolarizations. The toxin-Nav1.7 complex is gradually dissociated upon prolonged strong depolarizations in a voltage-dependent manner, and the unbound toxin rebinds to Nav1.7 after a long repolarization. Moreover, analysis of chimeric channels showed that the DIIS3-S4 linker is critical for toxin binding to Nav1.7. These data are consistent with this toxin interacting with Nav1.7 site 4 and trapping the domain II voltage sensor in the closed state. This chain is Hainantoxin-III 8, found in Cyriopagopus hainanus (Chinese bird spider).